Reading from the N-terminus, the 442-residue chain is D-serine dehydratase (442 aa).

Lys-118 is modified (N6-(pyridoxal phosphate)lysine).

This sequence belongs to the serine/threonine dehydratase family. DsdA subfamily. As to quaternary structure, monomer. The cofactor is pyridoxal 5'-phosphate.

It carries out the reaction D-serine = pyruvate + NH4(+). This is D-serine dehydratase from Escherichia coli O6:H1 (strain CFT073 / ATCC 700928 / UPEC).